Here is a 237-residue protein sequence, read N- to C-terminus: DNA repair protein RecO (237 aa).

This sequence belongs to the RecO family.

Its function is as follows. Involved in DNA repair and RecF pathway recombination. In Rickettsia felis (strain ATCC VR-1525 / URRWXCal2) (Rickettsia azadi), this protein is DNA repair protein RecO.